The primary structure comprises 348 residues: uncharacterized protein (348 aa).

Positions 1 to 26 (MKKRIILLLAVIIAAAAAGVAFYVAK) are cleaved as a signal peptide.

This is an uncharacterized protein from Bacillus subtilis (strain 168).